The chain runs to 1614 residues: Low-density lipoprotein receptor-related protein 5 (1614 aa).

A signal peptide spans 1-30; the sequence is METAPTRAPPPPPPPLLLLVLYCSLVPAAA. The interval 31 to 287 is beta-propeller 1; sequence SPLLLFANRR…YSPMDIQVLS (257 aa). The Extracellular portion of the chain corresponds to 31–1383; it reads SPLLLFANRR…PPSDDIPAHS (1353 aa). LDL-receptor class B repeat units lie at residues 74–118, 119–161, 162–205, 206–246, and 247–289; these read GAVY…DWVG, KKLY…DPAH, GYMY…DLEE, QKLY…TLSG, and DTLY…LSQE. Asn-92 and Asn-137 each carry an N-linked (GlcNAc...) asparagine glycan. The EGF-like 1 domain maps to 294 to 336; it reads FHTPCEEDNGGCSHLCLLSPREPFYSCACPTGVQLQDNGKTCK. 3 disulfides stabilise this stretch: Cys-298-Cys-309, Cys-305-Cys-320, and Cys-322-Cys-335. The segment at 340–601 is beta-propeller 2; sequence EEVLLLARRT…AVNVAKVVGT (262 aa). 5 LDL-receptor class B repeats span residues 384-426, 427-469, 470-513, 514-556, and 557-599; these read GYVY…DWVA, RNLY…HPVM, GLMY…DLQE, GKLY…LGDF, and IYWT…AKVV. Residues Asn-445 and Asn-498 are each glycosylated (N-linked (GlcNAc...) asparagine). Positions 600–640 constitute an EGF-like 2 domain; sequence GTNPCADGNGGCSHLCFFTPRATKCGCPIGLELLSDMKTCI. 3 disulfide bridges follow: Cys-604-Cys-615, Cys-611-Cys-624, and Cys-626-Cys-639. Positions 643–902 are beta-propeller 3; sequence EAFLVFTSRA…VFHSSRQDGL (260 aa). LDL-receptor class B repeat units lie at residues 686–728, 729–771, 772–814, 815–854, and 855–897; these read NHIY…DWMG, KNLY…DPTK, GYIY…DYAD, QRLYWTDLDTNMIESSNMLGQERMVIADDLPYPFGLTQYS, and DYIY…FHSS. The N-linked (GlcNAc...) asparagine glycan is linked to Asn-704. N-linked (GlcNAc...) asparagine glycosylation occurs at Asn-877. The region spanning 901 to 941 is the EGF-like 3 domain; sequence GLNDCVHSNGQCGQLCLAIPGGHRCGCASHYTLDPSSRNCS. 3 disulfides stabilise this stretch: Cys-905/Cys-916, Cys-912/Cys-925, and Cys-927/Cys-940. Residues 944-1211 form a beta-propeller 4 region; that stretch reads STFLLFSQKF…AVEEVSLEEF (268 aa). LDL-receptor class B repeat units follow at residues 988-1034, 1035-1077, 1078-1122, 1123-1164, and 1165-1206; these read KFIY…DIYS, RTLF…NAER, GYMY…DNAL, GKLF…VLGR, and HLYW…VEEV. Residues 1002 to 1025 are disordered; it reads AKDDGTQPSMLTSPSQSLSPDRQP. Positions 1007–1021 are enriched in polar residues; the sequence is TQPSMLTSPSQSLSP. In terms of domain architecture, EGF-like 4 spans 1212-1253; the sequence is SAHPCARDNGGCSHICIAKGDGTPRCSCPVHLVLLQNLLTCG. 12 cysteine pairs are disulfide-bonded: Cys-1216–Cys-1227, Cys-1223–Cys-1237, Cys-1239–Cys-1252, Cys-1258–Cys-1272, Cys-1265–Cys-1285, Cys-1279–Cys-1294, Cys-1297–Cys-1309, Cys-1304–Cys-1322, Cys-1316–Cys-1331, Cys-1335–Cys-1347, Cys-1342–Cys-1360, and Cys-1354–Cys-1369. LDL-receptor class A domains lie at 1257 to 1295, 1296 to 1332, and 1334 to 1370; these read TCSPDQFACTTGEIDCIPGAWRCDGFPECADQSDEEGCP, VCSASQFPCARGQCVDLRLRCDGEADCQDRSDEANCD, and VCLPNQFRCTSGQCVLIKQQCDSFPDCADGSDELMCE. The helical transmembrane segment at 1384 to 1406 threads the bilayer; sequence SAIGPVIGIILSLFVMGGVYFVC. Residues 1407–1614 lie on the Cytoplasmic side of the membrane; it reads QRVMCQRYTG…PPPSPCTDSS (208 aa). A disordered region spans residues 1474–1498; it reads RNHVTGASSSSSSSTKATLYPPILN. Residues 1499–1505 carry the PPPSP motif A motif; that stretch reads PPPSPAT. The PPPSP motif B motif lies at 1537-1544; that stretch reads PPTTPCST. The tract at residues 1567–1599 is disordered; it reads SDSDPYPPPPTPHSQYLSAEDSCPPSPGTERSY. Positions 1573–1580 match the PPPSP motif C motif; sequence PPPPTPHS. The PPPSP motif D signature appears at 1590–1595; that stretch reads PPSPGT. The PPPSP motif E motif lies at 1604–1611; it reads PPPPSPCT.

It belongs to the LDLR family. As to quaternary structure, homodimer; disulfide-linked. Forms phosphorylated oligomer aggregates on Wnt-signaling. Component of a WNT-signaling complex that contains a WNT protein, a FZD protein and LRP5 or LRP6. Interacts with FZD8; the interaction is formed on WNT-binding and signaling. Interacts (via the phosphorylated PPPSP motif domains) with AXIN1; the interaction prevents inhibition of beta-catenin phosphorylation and signaling and is enhanced in the presence of GSK3B and WNT1 or WNT3A. Interacts (via beta-propeller regions 3 and 4) with DKK1; the interaction, enhanced by MESD and/or KREMEN, inhibits beta-catenin signaling by preventing GSK3-mediated phosphorylation of the PPPSP motifs and subsequent, AXIN1 binding. Interacts with CSNK1E. Interacts with SOST; the interaction antagonizes canonical Wnt signaling. Interacts with APCDD1. Interacts with MESD; the interaction prevents the formation of LRP5 aggregates, targets LRP5 to the plasma membrane and, when complexed with KREMEN2, increases DKK1 binding. Interacts with CAPRIN2. In terms of processing, phosphorylation of cytoplasmic PPPSP motifs regulates the signal transduction of the Wnt signaling pathway through acting as a docking site for AXIN1. Widely expressed, with the highest expression levels in liver, heart, and lung and the lowest levels in brain and spleen.

It is found in the membrane. It localises to the endoplasmic reticulum. Its function is as follows. Acts as a coreceptor with members of the frizzled family of seven-transmembrane spanning receptors to transduce signal by Wnt proteins. Activates the canonical Wnt signaling pathway that controls cell fate determination and self-renewal during embryonic development and adult tissue regeneration. In particular, may play an important role in the development of the posterior patterning of the epiblast during gastrulation. During bone development, regulates osteoblast proliferation and differentiation thus determining bone mass. Mechanistically, the formation of the signaling complex between Wnt ligand, frizzled receptor and LRP5 coreceptor promotes the recruitment of AXIN1 to LRP5, stabilizing beta-catenin/CTNNB1 and activating TCF/LEF-mediated transcriptional programs. Acts as a coreceptor for non-Wnt proteins, such as norrin/NDP. Binding of norrin/NDP to frizzled 4/FZD4-LRP5 receptor complex triggers beta-catenin/CTNNB1-dependent signaling known to be required for retinal vascular development. Plays a role in controlling postnatal vascular regression in retina via macrophage-induced endothelial cell apoptosis. This is Low-density lipoprotein receptor-related protein 5 from Mus musculus (Mouse).